Here is a 574-residue protein sequence, read N- to C-terminus: Phospholipase B-like protein A (574 aa).

A signal peptide spans 1–20; the sequence is MRVIRSLLLLTIAIIGSVLS. Asn159, Asn195, and Asn415 each carry an N-linked (GlcNAc...) asparagine glycan.

It belongs to the phospholipase B-like family.

It is found in the secreted. Phospholipase that removes both fatty-acid chains from phosphatidylcholine and produces the water-soluble glycerophosphorylcholine. In addition to phosphatidylcholine deacylation, it also hydrolyzes phosphatidylinositol and phosphatidylethanolamine. The chain is Phospholipase B-like protein A (plbA) from Dictyostelium discoideum (Social amoeba).